Reading from the N-terminus, the 183-residue chain is Glutamyl-tRNA(Gln) amidotransferase subunit F, mitochondrial (183 aa).

The N-terminal 23 residues, 1-23 (MSRMLNQIPRLITRSFRTSSVGY), are a transit peptide targeting the mitochondrion.

This sequence belongs to the GatF family. Subunit of the heterotrimeric GatFAB amidotransferase (AdT) complex, composed of A, B and F subunits.

The protein resides in the mitochondrion inner membrane. The catalysed reaction is L-glutamyl-tRNA(Gln) + L-glutamine + ATP + H2O = L-glutaminyl-tRNA(Gln) + L-glutamate + ADP + phosphate + H(+). Allows the formation of correctly charged Gln-tRNA(Gln) through the transamidation of misacylated Glu-tRNA(Gln) in the mitochondria. The reaction takes place in the presence of glutamine and ATP through an activated gamma-phospho-Glu-tRNA(Gln). Required for proper protein synthesis within the mitochondrion. This is Glutamyl-tRNA(Gln) amidotransferase subunit F, mitochondrial from Debaryomyces hansenii (strain ATCC 36239 / CBS 767 / BCRC 21394 / JCM 1990 / NBRC 0083 / IGC 2968) (Yeast).